Consider the following 304-residue polypeptide: Ribosomal RNA small subunit methyltransferase H (304 aa).

Residues 36–38, Asp53, Phe79, Asp98, and Gln105 contribute to the S-adenosyl-L-methionine site; that span reads GGH.

Belongs to the methyltransferase superfamily. RsmH family.

It localises to the cytoplasm. It carries out the reaction cytidine(1402) in 16S rRNA + S-adenosyl-L-methionine = N(4)-methylcytidine(1402) in 16S rRNA + S-adenosyl-L-homocysteine + H(+). In terms of biological role, specifically methylates the N4 position of cytidine in position 1402 (C1402) of 16S rRNA. The chain is Ribosomal RNA small subunit methyltransferase H from Myxococcus xanthus (strain DK1622).